Here is a 425-residue protein sequence, read N- to C-terminus: Tyrosine--tRNA ligase (425 aa).

Tyr-37 provides a ligand contact to L-tyrosine. A 'HIGH' region motif is present at residues 42 to 51 (PTADSLHLGH). The L-tyrosine site is built by Tyr-175 and Gln-179. A 'KMSKS' region motif is present at residues 235-239 (KFGKT). Residue Lys-238 participates in ATP binding. Residues 357 to 414 (ADLQQALVSAELVPSRGQARTMISSNAVTINGEKQADPEYTFSASDRLFDRYTLLRRG) form the S4 RNA-binding domain.

It belongs to the class-I aminoacyl-tRNA synthetase family. TyrS type 1 subfamily. Homodimer.

The protein resides in the cytoplasm. The enzyme catalyses tRNA(Tyr) + L-tyrosine + ATP = L-tyrosyl-tRNA(Tyr) + AMP + diphosphate + H(+). Its function is as follows. Catalyzes the attachment of tyrosine to tRNA(Tyr) in a two-step reaction: tyrosine is first activated by ATP to form Tyr-AMP and then transferred to the acceptor end of tRNA(Tyr). The chain is Tyrosine--tRNA ligase from Pectobacterium carotovorum subsp. carotovorum (strain PC1).